The sequence spans 101 residues: Small ribosomal subunit protein uS14 (101 aa).

The segment covering 1–10 (MAKKSSIEKN) has biased composition (basic and acidic residues). Positions 1–23 (MAKKSSIEKNNRRKRMVKNAAPK) are disordered.

This sequence belongs to the universal ribosomal protein uS14 family. In terms of assembly, part of the 30S ribosomal subunit. Contacts proteins S3 and S10.

Binds 16S rRNA, required for the assembly of 30S particles and may also be responsible for determining the conformation of the 16S rRNA at the A site. The polypeptide is Small ribosomal subunit protein uS14 (Bradyrhizobium diazoefficiens (strain JCM 10833 / BCRC 13528 / IAM 13628 / NBRC 14792 / USDA 110)).